Reading from the N-terminus, the 83-residue chain is SPPVCGNKILEQGEDCDCGSPANCQDRCCNAATCKLTPGSQCNYGECCDQCRFKKAGTVCRIARGDWNDDYCTGKSSDCPWNH.

The Disintegrin domain maps to 2–83; it reads PPVCGNKILE…GKSSDCPWNH (82 aa). Intrachain disulfides connect Cys-5/Cys-24, Cys-5/Cys-34, Cys-16/Cys-29, Cys-16/Cys-34, Cys-18/Cys-24, Cys-18/Cys-29, Cys-28/Cys-51, Cys-42/Cys-48, Cys-47/Cys-72, and Cys-60/Cys-79. The Cell attachment site signature appears at 64–66; that stretch reads RGD.

It belongs to the venom metalloproteinase (M12B) family. P-II subfamily. P-IIa sub-subfamily. In terms of assembly, monomer. In terms of processing, exists in 3 forms in the venom. The forms A, B, and C are present at 53%, 32% and 15%. The forms A and B differ by their disulfide bond pattern in the N-terminal part. No information is known about form C. Expressed by the venom gland.

Its subcellular location is the secreted. Functionally, inhibits fibrinogen interaction with platelets. Acts by binding to alpha-IIb/beta-3 (ITGA2B/ITGB3) on the platelet surface and inhibits aggregation induced by ADP, thrombin, platelet-activating factor and collagen. This chain is Disintegrin bitistatin, found in Bitis arietans (African puff adder).